The primary structure comprises 1297 residues: Phosphoribosylformylglycinamidine synthase (1297 aa).

The tract at residues 304–323 is disordered; it reads PFPGAATGSGGEIRDEGATG. Residues 307 to 318 and A678 each bind ATP; that span reads GAATGSGGEIRD. The Mg(2+) site is built by D679, E718, N722, and D886. An ATP-binding site is contributed by S888. In terms of domain architecture, Glutamine amidotransferase type-1 spans 1043-1297; sequence RIAILREQGV…LFQNARVALG (255 aa). C1137 serves as the catalytic Nucleophile. Residues H1262 and E1264 contribute to the active site.

The protein in the N-terminal section; belongs to the FGAMS family. In terms of assembly, monomer.

It is found in the cytoplasm. It catalyses the reaction N(2)-formyl-N(1)-(5-phospho-beta-D-ribosyl)glycinamide + L-glutamine + ATP + H2O = 2-formamido-N(1)-(5-O-phospho-beta-D-ribosyl)acetamidine + L-glutamate + ADP + phosphate + H(+). It participates in purine metabolism; IMP biosynthesis via de novo pathway; 5-amino-1-(5-phospho-D-ribosyl)imidazole from N(2)-formyl-N(1)-(5-phospho-D-ribosyl)glycinamide: step 1/2. In terms of biological role, phosphoribosylformylglycinamidine synthase involved in the purines biosynthetic pathway. Catalyzes the ATP-dependent conversion of formylglycinamide ribonucleotide (FGAR) and glutamine to yield formylglycinamidine ribonucleotide (FGAM) and glutamate. This is Phosphoribosylformylglycinamidine synthase from Histophilus somni (strain 129Pt) (Haemophilus somnus).